We begin with the raw amino-acid sequence, 226 residues long: Ribonuclease 3 (226 aa).

Residues 7 to 129 (LPRLCRTLSY…IIGAVYLDSD (123 aa)) form the RNase III domain. Position 42 (Glu-42) interacts with Mg(2+). Asp-46 is an active-site residue. Mg(2+) contacts are provided by Asp-115 and Glu-118. Glu-118 is an active-site residue. In terms of domain architecture, DRBM spans 156–226 (DAKTLLQEHL…AAQVLELLKK (71 aa)).

It belongs to the ribonuclease III family. Homodimer. The cofactor is Mg(2+).

Its subcellular location is the cytoplasm. It carries out the reaction Endonucleolytic cleavage to 5'-phosphomonoester.. Digests double-stranded RNA. Involved in the processing of primary rRNA transcript to yield the immediate precursors to the large and small rRNAs (23S and 16S). Processes some mRNAs, and tRNAs when they are encoded in the rRNA operon. Processes pre-crRNA and tracrRNA of type II CRISPR loci if present in the organism. The polypeptide is Ribonuclease 3 (Shewanella baltica (strain OS223)).